The primary structure comprises 456 residues: Trigger factor (456 aa).

Residues Gly166–Pro245 form the PPIase FKBP-type domain.

The protein belongs to the FKBP-type PPIase family. Tig subfamily.

The protein resides in the cytoplasm. It carries out the reaction [protein]-peptidylproline (omega=180) = [protein]-peptidylproline (omega=0). Its function is as follows. Involved in protein export. Acts as a chaperone by maintaining the newly synthesized protein in an open conformation. Functions as a peptidyl-prolyl cis-trans isomerase. This is Trigger factor from Bifidobacterium adolescentis (strain ATCC 15703 / DSM 20083 / NCTC 11814 / E194a).